Reading from the N-terminus, the 473-residue chain is Photosystem II CP43 reaction center protein (473 aa).

Positions 1-14 are excised as a propeptide; the sequence is MKILYSLRRFYHVE. An N-acetylthreonine modification is found at threonine 15. Threonine 15 carries the phosphothreonine modification. A run of 5 helical transmembrane segments spans residues 69–93, 134–155, 178–200, 255–275, and 291–312; these read LFEV…PHLA, LLGP…KDRN, KALY…RKIT, KPFA…LSYS, and WFNN…ASQA. Residue glutamate 367 coordinates [CaMn4O5] cluster. The helical transmembrane segment at 447–471 threads the bilayer; the sequence is RARAAAAGFEKGIDRDLEPVLYMTP.

Belongs to the PsbB/PsbC family. PsbC subfamily. PSII is composed of 1 copy each of membrane proteins PsbA, PsbB, PsbC, PsbD, PsbE, PsbF, PsbH, PsbI, PsbJ, PsbK, PsbL, PsbM, PsbT, PsbX, PsbY, PsbZ, Psb30/Ycf12, at least 3 peripheral proteins of the oxygen-evolving complex and a large number of cofactors. It forms dimeric complexes. Binds multiple chlorophylls and provides some of the ligands for the Ca-4Mn-5O cluster of the oxygen-evolving complex. It may also provide a ligand for a Cl- that is required for oxygen evolution. PSII binds additional chlorophylls, carotenoids and specific lipids. serves as cofactor.

The protein localises to the plastid. The protein resides in the chloroplast thylakoid membrane. In terms of biological role, one of the components of the core complex of photosystem II (PSII). It binds chlorophyll and helps catalyze the primary light-induced photochemical processes of PSII. PSII is a light-driven water:plastoquinone oxidoreductase, using light energy to abstract electrons from H(2)O, generating O(2) and a proton gradient subsequently used for ATP formation. This Oryza nivara (Indian wild rice) protein is Photosystem II CP43 reaction center protein.